The primary structure comprises 328 residues: Malate dehydrogenase (328 aa).

Residue 12–18 (GAAGQIG) coordinates NAD(+). Substrate is bound by residues Arg93 and Arg99. Residues Asn106, Gln113, and 130–132 (VGN) contribute to the NAD(+) site. The substrate site is built by Asn132 and Arg163. His188 functions as the Proton acceptor in the catalytic mechanism.

The protein belongs to the LDH/MDH superfamily. MDH type 2 family.

It carries out the reaction (S)-malate + NAD(+) = oxaloacetate + NADH + H(+). In terms of biological role, catalyzes the reversible oxidation of malate to oxaloacetate. The protein is Malate dehydrogenase of Saccharopolyspora erythraea (strain ATCC 11635 / DSM 40517 / JCM 4748 / NBRC 13426 / NCIMB 8594 / NRRL 2338).